Reading from the N-terminus, the 427-residue chain is Probable purple acid phosphatase 20 (427 aa).

Residues 1–21 (MVKVLGLVAILLIVLAGNVLS) form the signal peptide. A glycan (N-linked (GlcNAc...) asparagine) is linked at Asn-85. 3 residues coordinate Fe cation: Asp-147, Asp-174, and Tyr-177. Asp-174 lines the Zn(2+) pocket. Asn-207 and His-291 together coordinate Zn(2+). Asn-207 is a substrate binding site. The active-site Proton donor is the His-301. A Zn(2+)-binding site is contributed by His-330. 330–332 (HVH) lines the substrate pocket. A Fe cation-binding site is contributed by His-332. N-linked (GlcNAc...) asparagine glycosylation is present at Asn-392.

This sequence belongs to the metallophosphoesterase superfamily. Purple acid phosphatase family. Homodimer. The cofactor is Fe cation. Zn(2+) serves as cofactor. As to expression, expressed flowers and siliques.

It is found in the secreted. It carries out the reaction a phosphate monoester + H2O = an alcohol + phosphate. This chain is Probable purple acid phosphatase 20 (PAP20), found in Arabidopsis thaliana (Mouse-ear cress).